A 139-amino-acid chain; its full sequence is MLRTMMKSKIHRATVTHADLHYVGSVTVDQDLLDAADLLEGEQVCIVDIDNGARLETYVIAGERGSGVIGINGAAAHLVHPGDLVILIAYGMMNEQEIAEYDPKVVFVDERNRPVELGSDPAHAPEGSGLTSPRSLTFA.

The active-site Schiff-base intermediate with substrate; via pyruvic acid is Ser25. Ser25 is modified (pyruvic acid (Ser)). Residue Thr57 participates in substrate binding. The active-site Proton donor is Tyr58. Residue Gly73 to Ala75 coordinates substrate. Residues Glu116 to Ala139 are disordered. The segment covering Gly129 to Ala139 has biased composition (polar residues).

This sequence belongs to the PanD family. Heterooctamer of four alpha and four beta subunits. Pyruvate serves as cofactor. Is synthesized initially as an inactive proenzyme, which is activated by self-cleavage at a specific serine bond to produce a beta-subunit with a hydroxyl group at its C-terminus and an alpha-subunit with a pyruvoyl group at its N-terminus.

The protein localises to the cytoplasm. The catalysed reaction is L-aspartate + H(+) = beta-alanine + CO2. It participates in cofactor biosynthesis; (R)-pantothenate biosynthesis; beta-alanine from L-aspartate: step 1/1. Catalyzes the pyruvoyl-dependent decarboxylation of aspartate to produce beta-alanine. The chain is Aspartate 1-decarboxylase from Nocardia farcinica (strain IFM 10152).